A 295-amino-acid polypeptide reads, in one-letter code: Probable dTDP-4,6-dihydroxy-2-methyloxan-3-one 4-ketoreductase (295 aa).

NADH-binding positions include 10 to 12 (GML), 36 to 37 (DV), 60 to 62 (AYT), Tyr126, and Lys130. NADPH-binding positions include 11-12 (ML), 36-37 (DV), 60-62 (AYT), Tyr126, and Lys130. Residue Tyr126 is the Proton donor/acceptor of the active site.

Belongs to the dTDP-4-dehydrorhamnose reductase family. Mg(2+) serves as cofactor.

The protein operates within antibiotic biosynthesis. Its function is as follows. Involved in the biosynthesis of one of the two 2,6-deoxysugars, dTDP-L-oleandrose, attached to the macrolactone ring oleandolide to produce the aglycone antibiotic oleandomycin. Probably catalyzes the reduction of dTDP-4-keto-2,6-dideoxy-beta-L-galactose to yield dTDP-L-olivose. The polypeptide is Probable dTDP-4,6-dihydroxy-2-methyloxan-3-one 4-ketoreductase (Streptomyces antibioticus).